The primary structure comprises 505 residues: Probable cytosol aminopeptidase (505 aa).

Positions 269 and 274 each coordinate Mn(2+). The active site involves K281. Mn(2+) is bound by residues D292, D351, and E353. R355 is a catalytic residue.

This sequence belongs to the peptidase M17 family. The cofactor is Mn(2+).

The protein resides in the cytoplasm. It catalyses the reaction Release of an N-terminal amino acid, Xaa-|-Yaa-, in which Xaa is preferably Leu, but may be other amino acids including Pro although not Arg or Lys, and Yaa may be Pro. Amino acid amides and methyl esters are also readily hydrolyzed, but rates on arylamides are exceedingly low.. It carries out the reaction Release of an N-terminal amino acid, preferentially leucine, but not glutamic or aspartic acids.. Presumably involved in the processing and regular turnover of intracellular proteins. Catalyzes the removal of unsubstituted N-terminal amino acids from various peptides. This chain is Probable cytosol aminopeptidase, found in Rhodococcus jostii (strain RHA1).